We begin with the raw amino-acid sequence, 268 residues long: Energy-coupling factor transporter transmembrane protein EcfT (268 aa).

Helical transmembrane passes span 26 to 46, 47 to 67, 73 to 93, 116 to 136, 151 to 171, and 246 to 266; these read ILAVLFYMVMVFLANSPLSYG, ILIGFIVLGAALAKLPAGLLL, LWIIILLTMVIHFVTDPGEAL, LVLLLLVSSLMTFTTSPIVLT, VPAHELAMMMTIALRFIPTLL, and ALTGLVMLALFVLLAFLRWGI.

Belongs to the energy-coupling factor EcfT family. Forms a stable energy-coupling factor (ECF) transporter complex composed of 2 membrane-embedded substrate-binding proteins (S component), 2 ATP-binding proteins (A component) and 2 transmembrane proteins (T component). May be able to interact with more than 1 S component at a time.

The protein localises to the cell membrane. Transmembrane (T) component of an energy-coupling factor (ECF) ABC-transporter complex. Unlike classic ABC transporters this ECF transporter provides the energy necessary to transport a number of different substrates. The sequence is that of Energy-coupling factor transporter transmembrane protein EcfT from Acidaminococcus fermentans (strain ATCC 25085 / DSM 20731 / CCUG 9996 / CIP 106432 / VR4).